A 434-amino-acid polypeptide reads, in one-letter code: Zinc finger and BTB domain-containing protein 8A (434 aa).

In terms of domain architecture, BTB spans 24-92 (CDCSILVEGK…VYSGKLSLTG (69 aa)). The tract at residues 134–238 (SLSDKDTGSN…SGNHVSQSEE (105 aa)) is disordered. Residues S161 and S167 each carry the phosphoserine modification. Glycyl lysine isopeptide (Lys-Gly) (interchain with G-Cter in SUMO2) cross-links involve residues K172, K176, and K193. Residues 192–202 (AKHEQRKEPSK) show a composition bias toward basic and acidic residues. Over residues 226–238 (QTDSGNHVSQSEE) the composition is skewed to polar residues. C2H2-type zinc fingers lie at residues 275 to 297 (FKCP…LRCH) and 303 to 326 (YPCQ…RTIH). K430 participates in a covalent cross-link: Glycyl lysine isopeptide (Lys-Gly) (interchain with G-Cter in SUMO2).

It localises to the nucleus. May be involved in transcriptional regulation. The chain is Zinc finger and BTB domain-containing protein 8A (Zbtb8a) from Mus musculus (Mouse).